Reading from the N-terminus, the 345-residue chain is NADH-quinone oxidoreductase subunit 8 (345 aa).

8 helical membrane-spanning segments follow: residues 15–35 (MLLQGLAVIAFVMGSLIFMVY), 82–102 (FVYFLAPFLSMMLALFAFVVI), 115–135 (VGILFIFAASSLEVYGVIMGG), 161–181 (LGLIIIGIIISTGSMNLTAIV), 190–210 (LLNWYWLPHLPMVVLFFVSAL), 240–262 (YLLFMAGEYIAMYLMCALLSLLF), 278–298 (WWMVIKMWFWFYMFAMVKAIV), and 309–329 (IGWKVFLPLSLGWVVLVAILA).

This sequence belongs to the complex I subunit 1 family. NDH-1 is composed of at least 14 different subunits, Nqo1 to Nqo14. The complex has a L-shaped structure, with the hydrophobic arm (subunits Nqo7, Nqo8, Nqo10 to Nqo14) embedded in the inner membrane and the hydrophilic peripheral arm (subunits Nqo1 to Nqo6, Nqo9) protruding into the bacterial cytoplasm. The hydrophilic domain contains all the redox centers.

The protein resides in the cell inner membrane. The catalysed reaction is a quinone + NADH + 5 H(+)(in) = a quinol + NAD(+) + 4 H(+)(out). Its function is as follows. NDH-1 shuttles electrons from NADH, via FMN and iron-sulfur (Fe-S) centers, to quinones in the respiratory chain. The immediate electron acceptor for the enzyme in this species is believed to be ubiquinone. Couples the redox reaction to proton translocation (for every two electrons transferred, four hydrogen ions are translocated across the cytoplasmic membrane), and thus conserves the redox energy in a proton gradient. The chain is NADH-quinone oxidoreductase subunit 8 from Paracoccus denitrificans.